The following is a 200-amino-acid chain: MIASVRGEVLEIALDHAVIESAGVGYRVNATPATLGGLQRGTEARLVTAMIVREDSMTLYGFPDSESKELFGLLQTVSGVGPRLAMATLAVLEPEALRSALAEGNVTALTRVPGIGKRGAERMVVELRDKVDAVGSTSGAVPLGAGGGGSVRDQIVEALVGLGFPAKQAEQATDSVLAEAPESTTSSALRSALSLLGKTR.

Residues 1–63 form a domain I region; the sequence is MIASVRGEVL…EDSMTLYGFP (63 aa). Residues 64–142 are domain II; it reads DSESKELFGL…AVGSTSGAVP (79 aa). A flexible linker region spans residues 142-146; that stretch reads PLGAG. Residues 147–200 form a domain III region; sequence GGGSVRDQIVEALVGLGFPAKQAEQATDSVLAEAPESTTSSALRSALSLLGKTR.

The protein belongs to the RuvA family. Homotetramer. Forms an RuvA(8)-RuvB(12)-Holliday junction (HJ) complex. HJ DNA is sandwiched between 2 RuvA tetramers; dsDNA enters through RuvA and exits via RuvB. An RuvB hexamer assembles on each DNA strand where it exits the tetramer. Each RuvB hexamer is contacted by two RuvA subunits (via domain III) on 2 adjacent RuvB subunits; this complex drives branch migration. In the full resolvosome a probable DNA-RuvA(4)-RuvB(12)-RuvC(2) complex forms which resolves the HJ.

Its subcellular location is the cytoplasm. Its function is as follows. The RuvA-RuvB-RuvC complex processes Holliday junction (HJ) DNA during genetic recombination and DNA repair, while the RuvA-RuvB complex plays an important role in the rescue of blocked DNA replication forks via replication fork reversal (RFR). RuvA specifically binds to HJ cruciform DNA, conferring on it an open structure. The RuvB hexamer acts as an ATP-dependent pump, pulling dsDNA into and through the RuvAB complex. HJ branch migration allows RuvC to scan DNA until it finds its consensus sequence, where it cleaves and resolves the cruciform DNA. This Rhodococcus opacus (strain B4) protein is Holliday junction branch migration complex subunit RuvA.